Here is a 1144-residue protein sequence, read N- to C-terminus: Alpha-mannosidase 2 (1144 aa).

Topologically, residues 1-5 are cytoplasmic; the sequence is MKLSR. Residues 6–26 form a helical; Signal-anchor for type II membrane protein membrane-spanning segment; it reads QFTVFGSAIFCVVIFSLYLML. Topologically, residues 27-1144 are lumenal; sequence DRGHLDYPRN…EISTFRIQLR (1118 aa). Asparagine 78 is a glycosylation site (N-linked (GlcNAc...) asparagine). 2 positions are modified to phosphoserine: serine 80 and serine 82. N-linked (GlcNAc...) asparagine glycosylation occurs at asparagine 93. 4 residues coordinate Zn(2+): histidine 175, aspartate 177, aspartate 289, and histidine 569. Aspartate 289 acts as the Nucleophile in catalysis. Asparagine 1125 carries N-linked (GlcNAc...) asparagine glycosylation.

The protein belongs to the glycosyl hydrolase 38 family. In terms of assembly, homodimer; disulfide-linked. Zn(2+) is required as a cofactor. Post-translationally, glycosylated.

Its subcellular location is the golgi apparatus membrane. The enzyme catalyses N(4)-{beta-D-GlcNAc-(1-&gt;2)-alpha-D-Man-(1-&gt;3)-[alpha-D-Man-(1-&gt;3)-[alpha-D-Man-(1-&gt;6)]-alpha-D-Man-(1-&gt;6)]-beta-D-Man-(1-&gt;4)-beta-D-GlcNAc-(1-&gt;4)-beta-D-GlcNAc}-L-asparaginyl-[protein] + 2 H2O = 2 alpha-D-mannopyranose + an N(4)-{beta-D-GlcNAc-(1-&gt;2)-alpha-D-Man-(1-&gt;3)-[alpha-D-Man-(1-&gt;6)]-beta-D-Man-(1-&gt;4)-beta-D-GlcNAc-(1-&gt;4)-beta-D-GlcNAc}-L-asparaginyl-[protein]. Its pathway is protein modification; protein glycosylation. In terms of biological role, catalyzes the first committed step in the biosynthesis of complex N-glycans. It controls conversion of high mannose to complex N-glycans; the final hydrolytic step in the N-glycan maturation pathway. This chain is Alpha-mannosidase 2 (MAN2A1), found in Homo sapiens (Human).